Reading from the N-terminus, the 309-residue chain is Protoheme IX farnesyltransferase (309 aa).

9 helical membrane-spanning segments follow: residues 30 to 49, 53 to 75, 98 to 118, 123 to 143, 151 to 171, 178 to 198, 224 to 244, 247 to 267, and 285 to 305; these read VMSLVVFTALVGILVAPGGV, IGFTAILFIALGAGASGALNMWY, AGEALTLGLWLSAISVAMLGL, VAAGLLAFTIFFYAVVYSMWL, IVIGGAAGSFPPMIGWAAVTG, VLMFGIIFMWTPPHFWALALF, ILIYTILLVPVALGLVLTEVA, VYLITALVCNAIFLKGAYDIW, and VFKFSLLYLFLHFGALLLDAI.

It belongs to the UbiA prenyltransferase family. Protoheme IX farnesyltransferase subfamily. In terms of assembly, interacts with CtaA.

Its subcellular location is the cell inner membrane. The catalysed reaction is heme b + (2E,6E)-farnesyl diphosphate + H2O = Fe(II)-heme o + diphosphate. Its pathway is porphyrin-containing compound metabolism; heme O biosynthesis; heme O from protoheme: step 1/1. Converts heme B (protoheme IX) to heme O by substitution of the vinyl group on carbon 2 of heme B porphyrin ring with a hydroxyethyl farnesyl side group. The polypeptide is Protoheme IX farnesyltransferase (Jannaschia sp. (strain CCS1)).